We begin with the raw amino-acid sequence, 398 residues long: Fatty-acid-binding protein 2 (398 aa).

Dodecanoate is bound by residues arginine 222, tyrosine 235, and serine 302.

Belongs to the chalcone isomerase family. In terms of tissue distribution, expressed in developing cotyledons, young seedlings, roots, seeds, embryos, macrospores, preanthesis and tapetum. Restricted to developing and reproductive tissues.

Its subcellular location is the plastid. The protein localises to the chloroplast stroma. Its function is as follows. Fatty-acid-binding protein. Associates with saturated fatty acid. The chain is Fatty-acid-binding protein 2 (FAP2) from Arabidopsis thaliana (Mouse-ear cress).